The sequence spans 617 residues: MLHVRGLGLPGCLALAALASLVHSQHVFLAPQQALSLLQRVRRANSGFLEELRKGNLERECVEEQCSYEEAFEALESPQDTDVFWAKYTVCDSVRKPRETFMDCLEGRCAMDLGLNYHGNVSVTHTGIECQLWRSRYPHRPDINSTTHPGADLKENFCRNPDSSTSGPWCYTTDPTVRREECSIPVCGQEGRTTVKMTPRSRGSKENLSPPLGECLLERGRLYQGNLAVTTLGSPCLAWDSLPTKTLSKYQNFDPEVKLVQNFCRNPDRDEEGAWCFVAQQPGFEYCSLNYCDEAVGEENHDGDESIAGRTTDAEFHTFFDERTFGLGEADCGLRPLFEKKSLTDKTEKELLDSYIDGRIVEGWDAEKGIAPWQVMLFRKSPQELLCGASLISDRWVLTAAHCILYPPWDKNFTENDLLVRIGKHSRTRYERNVEKISMLEKIYIHPRYNWRENLDRDIALLKLKKPVPFSDYIHPVCLPDKQTVTSLLQAGYKGRVTGWGNLRETWTTNINEIQPSVLQVVNLPIVERPVCKASTRIRITDNMFCAGFKVNDTKRGDACEGDSGGPFVMKSPYNHRWYQMGIVSWGEGCDRNGKYGFYTHVFRLKRWMQKVIDQHR.

A signal peptide spans 1 to 24 (MLHVRGLGLPGCLALAALASLVHS). A propeptide spanning residues 25 to 43 (QHVFLAPQQALSLLQRVRR) is cleaved from the precursor. The region spanning 44-90 (ANSGFLEELRKGNLERECVEEQCSYEEAFEALESPQDTDVFWAKYTV) is the Gla domain. 10 positions are modified to 4-carboxyglutamate: glutamate 50, glutamate 51, glutamate 58, glutamate 60, glutamate 63, glutamate 64, glutamate 69, glutamate 70, glutamate 73, and glutamate 76. A disulfide bridge connects residues cysteine 61 and cysteine 66. 10 disulfides stabilise this stretch: cysteine 91-cysteine 104, cysteine 109-cysteine 187, cysteine 130-cysteine 170, cysteine 158-cysteine 182, cysteine 215-cysteine 292, cysteine 236-cysteine 276, cysteine 264-cysteine 287, cysteine 332-cysteine 478, cysteine 387-cysteine 403, and cysteine 532-cysteine 546. Kringle domains lie at 109–187 (CAMD…IPVC) and 215–292 (CLLE…LNYC). Asparagine 120 and asparagine 144 each carry an N-linked (GlcNAc...) asparagine glycan. Residues 360–614 (IVEGWDAEKG…LKRWMQKVID (255 aa)) form the Peptidase S1 domain. Catalysis depends on histidine 402, which acts as the Charge relay system. Asparagine 412 is a glycosylation site (N-linked (GlcNAc...) asparagine). Aspartate 458 (charge relay system) is an active-site residue. The interval 547 to 569 (AGFKVNDTKRGDACEGDSGGPFV) is high affinity receptor-binding region which is also known as the TP508 peptide. The N-linked (GlcNAc...) asparagine glycan is linked to asparagine 552. The cysteines at positions 560 and 590 are disulfide-linked. The Charge relay system role is filled by serine 564.

The protein belongs to the peptidase S1 family. As to quaternary structure, heterodimer (named alpha-thrombin) of a light and a heavy chain; disulfide-linked. Forms a heterodimer with SERPINA5. In plasma, interacts (via N-terminus) with alpha-1-microglobulin; this interaction does not prevent the activation of prothrombin to thrombin. Post-translationally, the gamma-carboxyglutamyl residues, which bind calcium ions, result from the carboxylation of glutamyl residues by a microsomal enzyme, the vitamin K-dependent carboxylase. The modified residues are necessary for the calcium-dependent interaction with a negatively charged phospholipid surface, which is essential for the conversion of prothrombin to thrombin. In terms of processing, in the penultimate step of the coagulation cascade, prothrombin is converted to thrombin by the prothrombinase complex composed of factor Xa (F10), cofactor Va (F5), and phospholipids. This activation requires factor Xa-catalyzed sequential cleavage at 2 sites, Arg-310 and Arg-359, along 2 possible pathways. In the first pathway, the first cleavage occurs at Arg-310, leading to the formation of the inactive intermediate prethrombin-2. This pathway preferentially occurs on platelets and in the absence of cofactor Va. In the second pathway, the first cleavage occurs at Arg-359, which separates protease domain into 2 chains that remain connected through a disulfide bond and generates the active intermediate meizothrombin. The presence of cofactor Va directs activation along the meizothrombin pathway and greatly accelerates the rate of cleavage at Arg-359, but has a smaller effect on the cleavage of meizothrombin at Arg-310. Meizothrombin accumulates as an intermediate when prothrombinase is assembled on the membrane of red blood cells.

The enzyme catalyses Selective cleavage of Arg-|-Gly bonds in fibrinogen to form fibrin and release fibrinopeptides A and B.. With respect to regulation, activity is promoted in the presence of negatively charged surfaces, such as polyphosphate and dextran sulfate. Inhibited by SERPINA5. Thrombin, which cleaves bonds after Arg and Lys, converts fibrinogen to fibrin and activates factors V, VII, VIII, XIII, and, in complex with thrombomodulin, protein C. Functions in blood homeostasis, inflammation and wound healing. Activates coagulation factor XI (F11); activation is promoted by the contact with negatively charged surfaces. Triggers the production of pro-inflammatory cytokines, such as MCP-1/CCL2 and IL8/CXCL8, in endothelial cells. The chain is Prothrombin (F2) from Rattus norvegicus (Rat).